A 433-amino-acid chain; its full sequence is Putative tartrate transporter (433 aa).

11 helical membrane passes run 17–37 (IVPF…NIGF), 47–67 (GFSS…YFLF), 82–102 (IWIA…AFVQ), 113–133 (LLGV…SFWF), 139–159 (AAVT…GSPI), 177–197 (WMFL…LFYL), 242–262 (VIAL…LGIW), 275–295 (LQVG…MVLW), 314–334 (LLAA…TVLI), 350–370 (LWSM…IATI), and 395–415 (FAGG…VTLV).

It belongs to the major facilitator superfamily. Phthalate permease family.

The protein localises to the cell membrane. Functionally, component of the tartrate utilization system and may allow entry of tartrate and tartrate dehydrogenase. The sequence is that of Putative tartrate transporter (ttuB) from Agrobacterium vitis (Rhizobium vitis).